The chain runs to 314 residues: Homoserine kinase (314 aa).

Residue 96–106 participates in ATP binding; that stretch reads PIGSGLGSSAC.

Belongs to the GHMP kinase family. Homoserine kinase subfamily.

The protein resides in the cytoplasm. It carries out the reaction L-homoserine + ATP = O-phospho-L-homoserine + ADP + H(+). It participates in amino-acid biosynthesis; L-threonine biosynthesis; L-threonine from L-aspartate: step 4/5. Catalyzes the ATP-dependent phosphorylation of L-homoserine to L-homoserine phosphate. In Mannheimia succiniciproducens (strain KCTC 0769BP / MBEL55E), this protein is Homoserine kinase.